A 257-amino-acid chain; its full sequence is Pantothenate synthetase (257 aa).

Position 29-36 (29-36 (MGNLHAGH)) interacts with ATP. His-36 functions as the Proton donor in the catalytic mechanism. A (R)-pantoate-binding site is contributed by Gln-60. A beta-alanine-binding site is contributed by Gln-60. 145-148 (GEKD) provides a ligand contact to ATP. A (R)-pantoate-binding site is contributed by Gln-151. ATP contacts are provided by residues Val-174 and 182–185 (LSSR).

The protein belongs to the pantothenate synthetase family. In terms of assembly, homodimer.

It is found in the cytoplasm. The catalysed reaction is (R)-pantoate + beta-alanine + ATP = (R)-pantothenate + AMP + diphosphate + H(+). The protein operates within cofactor biosynthesis; (R)-pantothenate biosynthesis; (R)-pantothenate from (R)-pantoate and beta-alanine: step 1/1. Catalyzes the condensation of pantoate with beta-alanine in an ATP-dependent reaction via a pantoyl-adenylate intermediate. In Coxiella burnetii (strain CbuK_Q154) (Coxiella burnetii (strain Q154)), this protein is Pantothenate synthetase.